The primary structure comprises 79 residues: MSNKGQLLQDPFLNALRKEHVPVSIYLVNGIKLQGNIESFDQYVVLLRNTVTQMVYKHAISTVVPARAVNFRVDDSSES.

Residues 10 to 69 form the Sm domain; that stretch reads DPFLNALRKEHVPVSIYLVNGIKLQGNIESFDQYVVLLRNTVTQMVYKHAISTVVPARAV.

It belongs to the Hfq family. As to quaternary structure, homohexamer.

RNA chaperone that binds small regulatory RNA (sRNAs) and mRNAs to facilitate mRNA translational regulation in response to envelope stress, environmental stress and changes in metabolite concentrations. Also binds with high specificity to tRNAs. This Cupriavidus metallidurans (strain ATCC 43123 / DSM 2839 / NBRC 102507 / CH34) (Ralstonia metallidurans) protein is RNA-binding protein Hfq.